Reading from the N-terminus, the 341-residue chain is tRNA N6-adenosine threonylcarbamoyltransferase (341 aa).

Residues His-111 and His-115 each contribute to the Fe cation site. Residues 134-138 (LVSGG), Asp-167, Gly-180, and Asn-276 contribute to the substrate site. Residue Asp-304 participates in Fe cation binding.

Belongs to the KAE1 / TsaD family. Fe(2+) is required as a cofactor.

Its subcellular location is the cytoplasm. The catalysed reaction is L-threonylcarbamoyladenylate + adenosine(37) in tRNA = N(6)-L-threonylcarbamoyladenosine(37) in tRNA + AMP + H(+). In terms of biological role, required for the formation of a threonylcarbamoyl group on adenosine at position 37 (t(6)A37) in tRNAs that read codons beginning with adenine. Is involved in the transfer of the threonylcarbamoyl moiety of threonylcarbamoyl-AMP (TC-AMP) to the N6 group of A37, together with TsaE and TsaB. TsaD likely plays a direct catalytic role in this reaction. This chain is tRNA N6-adenosine threonylcarbamoyltransferase, found in Pseudomonas putida (strain W619).